Consider the following 132-residue polypeptide: Rubredoxin-1 (132 aa).

In terms of domain architecture, Rubredoxin-like spans 1-53; it reads MSRYQCPDCQYIYDENKGEPHEGFHPNTSWNDIPKDWACPDCAVRDKVDFIFL. The Fe cation site is built by Cys-6, Cys-9, Cys-39, and Cys-42. The interval 108 to 132 is disordered; sequence TEVLDQASTPQVVRKSSTRKKMRNK. A compositionally biased stretch (polar residues) spans 113–122; it reads QASTPQVVRK. Residues 123–132 are compositionally biased toward basic residues; the sequence is SSTRKKMRNK.

It belongs to the rubredoxin family. It depends on Fe(3+) as a cofactor.

The protein resides in the cytoplasm. It functions in the pathway hydrocarbon metabolism; alkane degradation. Its function is as follows. Not known. Probably involved in an electron transport pathway, but not required for the hydrocarbon hydroxylating system. Seems to be non-functional. This chain is Rubredoxin-1 (alkF), found in Ectopseudomonas oleovorans (Pseudomonas oleovorans).